Here is a 96-residue protein sequence, read N- to C-terminus: Large ribosomal subunit protein bL28 (96 aa).

The protein belongs to the bacterial ribosomal protein bL28 family.

This Orientia tsutsugamushi (strain Boryong) (Rickettsia tsutsugamushi) protein is Large ribosomal subunit protein bL28.